The chain runs to 150 residues: Cytochrome b5 type B (150 aa).

Residues 1–15 (MSGSMATAEASGSDG) constitute a propeptide that is removed on maturation. Residues 1–20 (MSGSMATAEASGSDGKGQEV) are disordered. Ser-23 carries the phosphoserine modification. Residues 24–100 (VTYYRLEEVA…LKQYYIGDIH (77 aa)) form the Cytochrome b5 heme-binding domain. Lys-34 carries the post-translational modification N6-acetyllysine. Ser-37 is subject to Phosphoserine. An N6-methyllysine modification is found at Lys-39. 2 residues coordinate heme: His-59 and His-83. Ser-84 carries the phosphoserine modification. The chain crosses the membrane as a helical span at residues 123–140 (WAYWILPIIGAVLLGFLY).

This sequence belongs to the cytochrome b5 family. As to quaternary structure, component of a complex composed of cytochrome b5, NADH-cytochrome b5 reductase (CYB5R3) and MTARC2.

The protein resides in the mitochondrion outer membrane. In terms of biological role, cytochrome b5 is a membrane-bound hemoprotein functioning as an electron carrier for several membrane-bound oxygenases. The sequence is that of Cytochrome b5 type B (CYB5B) from Homo sapiens (Human).